We begin with the raw amino-acid sequence, 826 residues long: Ribosome-releasing factor 2, mitochondrial (826 aa).

The transit peptide at 1 to 44 (MIVRNLLGKNRLCCLQPKLLLSTLSQRPQLQLSLQLLCRATRLY) directs the protein to the mitochondrion. A tr-type G domain is found at 53 to 340 (PKTRNIGIIA…GITNYLPSPL (288 aa)). Residues 62–69 (AHIDAGKT), 126–130 (DTPGH), and 180–183 (NKMD) each bind GTP.

The protein belongs to the TRAFAC class translation factor GTPase superfamily. Classic translation factor GTPase family. EF-G/EF-2 subfamily.

The protein resides in the mitochondrion. Mitochondrial GTPase that mediates the disassembly of ribosomes from messenger RNA at the termination of mitochondrial protein biosynthesis. Not involved in the GTP-dependent ribosomal translocation step during translation elongation. The chain is Ribosome-releasing factor 2, mitochondrial from Lodderomyces elongisporus (strain ATCC 11503 / CBS 2605 / JCM 1781 / NBRC 1676 / NRRL YB-4239) (Yeast).